Reading from the N-terminus, the 1021-residue chain is Immunoglobulin superfamily member 2 (1021 aa).

A signal peptide spans 1 to 20 (MAGISYVASFFLLLTKLSIG). Residues 21 to 954 (QREVTVQKGP…LPSRICSSAP (934 aa)) are Extracellular-facing. 7 consecutive Ig-like C2-type domains span residues 22-139 (REVT…AKTN), 144-265 (PDTL…WMFI), 279-389 (PAVK…RTGS), 408-525 (PAAR…RDLS), 541-651 (LQVS…NSLY), 656-794 (PRAS…WHKL), and 808-925 (PTGS…KWIN). 2 cysteine pairs are disulfide-bonded: Cys-43–Cys-121 and Cys-168–Cys-249. Residue Asn-44 is glycosylated (N-linked (GlcNAc...) asparagine). The EWI motif motif lies at 253–255 (EWI). 5 disulfides stabilise this stretch: Cys-304/Cys-377, Cys-434/Cys-511, Cys-562/Cys-640, Cys-697/Cys-778, and Cys-834/Cys-909. The N-linked (GlcNAc...) asparagine glycan is linked to Asn-322. Residues 955–975 (LLYFLFICPFVLLLLLLISLL) traverse the membrane as a helical segment. Residues 976–1021 (CLYWKARKLSTLRSNTRKEKALWVDLKEAGGVTTNRREDEEEDEGN) lie on the Cytoplasmic side of the membrane.

In terms of processing, N-glycosylated. In terms of tissue distribution, expressed in lung, thymus and small intestine. Detected in cutaneous dendritic cells, activated T-cells, monocytes and granulocytes as well as with epithelial cells with dendritic morphology. Expressed in some leukemic cells, the CD4(+) CD56(+) blastic tumor cells, as well as in Langerhans cells from LCH (Langerhans cell histiocytosis) patients.

It localises to the membrane. In terms of biological role, plays a role as inhibitor of T-cells proliferation induced by CD3. Inhibits expression of IL2RA on activated T-cells and secretion of IL2. Inhibits tyrosine kinases that are required for IL2 production and cellular proliferation. Inhibits phospholipase C-gamma-1/PLCG1 phosphorylation and subsequent CD3-induced changes in intracellular free calcium. Prevents nuclear translocation of nuclear factor of activated T-cell to the nucleus. Plays a role in the inhibition of T-cell proliferation via IL10 secretion by cutaneous dendritic cells. May be a marker of CD4(+) CD56(+) leukemic tumor cells. The protein is Immunoglobulin superfamily member 2 (CD101) of Homo sapiens (Human).